A 142-amino-acid chain; its full sequence is Conidial pigment biosynthesis dehydratase EthD (142 aa).

One can recognise an EthD domain in the interval 25–121 (PGMSEAAYRE…PDHQKFADTS (97 aa)).

The protein belongs to the tpcK family.

The protein operates within pigment biosynthesis. Its function is as follows. Dehydratase; part of the Pks1 gene cluster that mediates the biosynthesis of an anthraquinone derivative pigment that contributes to conidial pigmentation that provides protection from UV radiation, heat and cold stress. The polyketide synthase Pks1 produces 1-acetyl-2,4,6,8-tetrahydroxy-9,10-anthraquinone though condensation of acetyl-CoA with malonyl-CoA. The dehydratase EthD and the laccase Mlac1 further convert the anthraquinone derivative into the final conidial pigment. This chain is Conidial pigment biosynthesis dehydratase EthD, found in Metarhizium robertsii (strain ARSEF 23 / ATCC MYA-3075) (Metarhizium anisopliae (strain ARSEF 23)).